Here is a 205-residue protein sequence, read N- to C-terminus: Holliday junction branch migration complex subunit RuvA (205 aa).

The tract at residues Met-1–Ala-64 is domain I. Positions Glu-65–Thr-143 are domain II. The flexible linker stretch occupies residues Leu-144–Ser-154. A domain III region spans residues Ser-154 to Lys-205.

This sequence belongs to the RuvA family. As to quaternary structure, homotetramer. Forms an RuvA(8)-RuvB(12)-Holliday junction (HJ) complex. HJ DNA is sandwiched between 2 RuvA tetramers; dsDNA enters through RuvA and exits via RuvB. An RuvB hexamer assembles on each DNA strand where it exits the tetramer. Each RuvB hexamer is contacted by two RuvA subunits (via domain III) on 2 adjacent RuvB subunits; this complex drives branch migration. In the full resolvosome a probable DNA-RuvA(4)-RuvB(12)-RuvC(2) complex forms which resolves the HJ.

It is found in the cytoplasm. Functionally, the RuvA-RuvB-RuvC complex processes Holliday junction (HJ) DNA during genetic recombination and DNA repair, while the RuvA-RuvB complex plays an important role in the rescue of blocked DNA replication forks via replication fork reversal (RFR). RuvA specifically binds to HJ cruciform DNA, conferring on it an open structure. The RuvB hexamer acts as an ATP-dependent pump, pulling dsDNA into and through the RuvAB complex. HJ branch migration allows RuvC to scan DNA until it finds its consensus sequence, where it cleaves and resolves the cruciform DNA. This Pseudomonas entomophila (strain L48) protein is Holliday junction branch migration complex subunit RuvA.